A 264-amino-acid polypeptide reads, in one-letter code: Small ribosomal subunit protein eS4 (264 aa).

Positions 42–104 constitute an S4 RNA-binding domain; the sequence is LPLVIIMRNR…TNENFRLLYD (63 aa).

The protein belongs to the eukaryotic ribosomal protein eS4 family.

It localises to the cytoplasm. In Solanum tuberosum (Potato), this protein is Small ribosomal subunit protein eS4 (RPS4).